A 2339-amino-acid polypeptide reads, in one-letter code: DNA-directed RNA polymerase III subunit RPC1 (2339 aa).

Zn(2+)-binding residues include cysteine 88, cysteine 91, cysteine 98, histidine 101, cysteine 128, cysteine 131, and cysteine 175. 3 residues coordinate Mg(2+): aspartate 611, aspartate 613, and aspartate 615. The tract at residues 955–967 (PTEFFFHTMSGRE) is bridging helix. Disordered stretches follow at residues 1503–1557 (EKRK…NNYY) and 2038–2079 (LKSE…DSDR). A compositionally biased stretch (basic and acidic residues) spans 1509-1520 (PKEEKENFDRNN). A compositionally biased stretch (low complexity) spans 1521-1557 (YKMITDNNNNDNNNNNNDNNNNDNNNNNNNSNNNNYY). Positions 2038-2047 (LKSEKKKDIN) are enriched in basic and acidic residues. A compositionally biased stretch (low complexity) spans 2049-2059 (DNNNNDDNNNN).

Belongs to the RNA polymerase beta' chain family. As to quaternary structure, component of the RNA polymerase III (Pol III) complex consisting of 17 subunits.

The protein localises to the nucleus. The enzyme catalyses RNA(n) + a ribonucleoside 5'-triphosphate = RNA(n+1) + diphosphate. Functionally, DNA-dependent RNA polymerase catalyzes the transcription of DNA into RNA using the four ribonucleoside triphosphates as substrates. Largest and catalytic core component of RNA polymerase III which synthesizes small RNAs, such as 5S rRNA and tRNAs. Forms the polymerase active center together with the second largest subunit. A single-stranded DNA template strand of the promoter is positioned within the central active site cleft of Pol III. A bridging helix emanates from RPC1 and crosses the cleft near the catalytic site and is thought to promote translocation of Pol III by acting as a ratchet that moves the RNA-DNA hybrid through the active site by switching from straight to bent conformations at each step of nucleotide addition. The polypeptide is DNA-directed RNA polymerase III subunit RPC1 (Plasmodium falciparum).